A 284-amino-acid chain; its full sequence is 2-dehydro-3-deoxyphosphooctonate aldolase (284 aa).

This sequence belongs to the KdsA family.

Its subcellular location is the cytoplasm. It carries out the reaction D-arabinose 5-phosphate + phosphoenolpyruvate + H2O = 3-deoxy-alpha-D-manno-2-octulosonate-8-phosphate + phosphate. It functions in the pathway carbohydrate biosynthesis; 3-deoxy-D-manno-octulosonate biosynthesis; 3-deoxy-D-manno-octulosonate from D-ribulose 5-phosphate: step 2/3. The protein operates within bacterial outer membrane biogenesis; lipopolysaccharide biosynthesis. In Citrobacter koseri (strain ATCC BAA-895 / CDC 4225-83 / SGSC4696), this protein is 2-dehydro-3-deoxyphosphooctonate aldolase.